A 505-amino-acid polypeptide reads, in one-letter code: ATP synthase subunit beta (505 aa).

158–165 (GGAGVGKT) contacts ATP.

Belongs to the ATPase alpha/beta chains family. In terms of assembly, F-type ATPases have 2 components, CF(1) - the catalytic core - and CF(0) - the membrane proton channel. CF(1) has five subunits: alpha(3), beta(3), gamma(1), delta(1), epsilon(1). CF(0) has three main subunits: a(1), b(2) and c(9-12). The alpha and beta chains form an alternating ring which encloses part of the gamma chain. CF(1) is attached to CF(0) by a central stalk formed by the gamma and epsilon chains, while a peripheral stalk is formed by the delta and b chains.

It is found in the cell inner membrane. It carries out the reaction ATP + H2O + 4 H(+)(in) = ADP + phosphate + 5 H(+)(out). In terms of biological role, produces ATP from ADP in the presence of a proton gradient across the membrane. The catalytic sites are hosted primarily by the beta subunits. The sequence is that of ATP synthase subunit beta from Parabacteroides distasonis (strain ATCC 8503 / DSM 20701 / CIP 104284 / JCM 5825 / NCTC 11152).